The primary structure comprises 249 residues: Probable transcriptional regulatory protein CYB_1350 (249 aa).

This sequence belongs to the TACO1 family.

It is found in the cytoplasm. The sequence is that of Probable transcriptional regulatory protein CYB_1350 from Synechococcus sp. (strain JA-2-3B'a(2-13)) (Cyanobacteria bacterium Yellowstone B-Prime).